The primary structure comprises 156 residues: Transcriptional repressor NrdR (156 aa).

A zinc finger lies at 3–34 (CPKCNSTHSRVVDSRHADEVNAIRRRRECEEC). In terms of domain architecture, ATP-cone spans 49 to 139 (LIVVKKDGTR…VYKEFKDVDQ (91 aa)).

It belongs to the NrdR family. The cofactor is Zn(2+).

Functionally, negatively regulates transcription of bacterial ribonucleotide reductase nrd genes and operons by binding to NrdR-boxes. The polypeptide is Transcriptional repressor NrdR (Staphylococcus saprophyticus subsp. saprophyticus (strain ATCC 15305 / DSM 20229 / NCIMB 8711 / NCTC 7292 / S-41)).